A 224-amino-acid chain; its full sequence is Putative adhesin RMA_1308 (224 aa).

Residues 1–22 (MQKLLLIAATSATILSSSLSFA) form the signal peptide.

The polypeptide is Putative adhesin RMA_1308 (Rickettsia massiliae (strain Mtu5)).